A 277-amino-acid chain; its full sequence is Large ribosomal subunit protein uL2 (277 aa).

Residues 222–277 form a disordered region; sequence GVAMNPVDHPHGGGEGRTSGGRHPVTPWGKPTKGKKTRSNKATDKFIMRSRHQRKK.

Belongs to the universal ribosomal protein uL2 family. In terms of assembly, part of the 50S ribosomal subunit. Forms a bridge to the 30S subunit in the 70S ribosome.

Functionally, one of the primary rRNA binding proteins. Required for association of the 30S and 50S subunits to form the 70S ribosome, for tRNA binding and peptide bond formation. It has been suggested to have peptidyltransferase activity; this is somewhat controversial. Makes several contacts with the 16S rRNA in the 70S ribosome. The polypeptide is Large ribosomal subunit protein uL2 (Brucella abortus (strain S19)).